The following is a 189-amino-acid chain: Elongation factor P (189 aa).

The protein belongs to the elongation factor P family.

The protein resides in the cytoplasm. It participates in protein biosynthesis; polypeptide chain elongation. Its function is as follows. Involved in peptide bond synthesis. Stimulates efficient translation and peptide-bond synthesis on native or reconstituted 70S ribosomes in vitro. Probably functions indirectly by altering the affinity of the ribosome for aminoacyl-tRNA, thus increasing their reactivity as acceptors for peptidyl transferase. The sequence is that of Elongation factor P from Aster yellows witches'-broom phytoplasma (strain AYWB).